The primary structure comprises 624 residues: Fibronectin type III domain-containing protein 2 (624 aa).

The N-terminal stretch at 1–19 (MREQFSVLVISLLFSSSYG) is a signal peptide. Fibronectin type-III domains lie at 131–236 (PPQN…TPDI), 240–330 (EPTN…TDVF), 334–430 (MPRF…TVPT), 431–524 (VPRE…PKRD), and 527–624 (VPPN…WPGR).

As to expression, prismatic layer of shell (at protein level).

It localises to the secreted. In Margaritifera margaritifera (Freshwater pearl mussel), this protein is Fibronectin type III domain-containing protein 2.